A 94-amino-acid chain; its full sequence is Cell division topological specificity factor (94 aa).

The protein belongs to the MinE family.

Its function is as follows. Prevents the cell division inhibition by proteins MinC and MinD at internal division sites while permitting inhibition at polar sites. This ensures cell division at the proper site by restricting the formation of a division septum at the midpoint of the long axis of the cell. The protein is Cell division topological specificity factor of Beijerinckia indica subsp. indica (strain ATCC 9039 / DSM 1715 / NCIMB 8712).